A 132-amino-acid polypeptide reads, in one-letter code: uncharacterized protein (132 aa).

The signal sequence occupies residues 1 to 18 (MRKIISMLFIPLFIFAMA).

This is an uncharacterized protein from Aquifex aeolicus (strain VF5).